The sequence spans 150 residues: Leukotriene C4 synthase (150 aa).

Over 1 to 6 the chain is Cytoplasmic; that stretch reads MKDEVA. Residues 7 to 27 form a helical membrane-spanning segment; the sequence is LLATVTLVGVLLQAYFSLQVI. Over 28-48 the chain is Lumenal; that stretch reads SARRAFHVSPPLTSGPPEFER. R30 provides a ligand contact to glutathione. The active-site Proton donor is R31. Phosphoserine is present on S36. Residues 49–69 form a helical membrane-spanning segment; that stretch reads VFRAQVNCSEYFPLFLATLWV. Glutathione is bound by residues 51 to 55, Q53, and 58 to 59; these read RAQVN and EY. At 70–73 the chain is on the cytoplasmic side; sequence AGIF. A helical membrane pass occupies residues 74–94; it reads FHEGAAALCGLFYLFARLRYF. 93–97 contributes to the glutathione binding site; sequence YFQGY. Topologically, residues 95-104 are lumenal; it reads QGYARSAQLR. R104 functions as the Proton acceptor in the catalytic mechanism. A helical transmembrane segment spans residues 105–124; the sequence is LTPLYASARALWLLVAMAAL. Topologically, residues 125 to 150 are cytoplasmic; the sequence is GLLVHFLPGTLRTALFRWLQMLLPMA.

The protein belongs to the MAPEG family. Homotrimer. Interacts with ALOX5AP and ALOX5. In terms of processing, phosphorylation at Ser-36 by RPS6KB1 inhibits the leukotriene-C4 synthase activity. Widely expressed.

Its subcellular location is the nucleus outer membrane. The protein resides in the endoplasmic reticulum membrane. The protein localises to the nucleus membrane. It catalyses the reaction leukotriene C4 = leukotriene A4 + glutathione. The catalysed reaction is (13S,14S)-epoxy-(4Z,7Z,9E,11E,16Z,19Z)-docosahexaenoate + glutathione = (13R)-S-glutathionyl-(14S)-hydroxy-(4Z,7Z,9E,11E,16Z,19Z)-docosahexaenoate. It functions in the pathway lipid metabolism; leukotriene C4 biosynthesis. Its activity is regulated as follows. Inhibited by MK886. Its function is as follows. Catalyzes the conjugation of leukotriene A4 with reduced glutathione (GSH) to form leukotriene C4 with high specificity. Can also catalyze the transfer of a glutathionyl group from glutathione (GSH) to 13(S),14(S)-epoxy-docosahexaenoic acid to form maresin conjugate in tissue regeneration 1 (MCTR1), a bioactive lipid mediator that possess potent anti-inflammatory and proresolving actions. The chain is Leukotriene C4 synthase (Ltc4s) from Mus musculus (Mouse).